We begin with the raw amino-acid sequence, 138 residues long: DNA-directed RNA polymerase subunit omega (138 aa).

The protein belongs to the RNA polymerase subunit omega family. In terms of assembly, the RNAP catalytic core consists of 2 alpha, 1 beta, 1 beta' and 1 omega subunit. When a sigma factor is associated with the core the holoenzyme is formed, which can initiate transcription.

It catalyses the reaction RNA(n) + a ribonucleoside 5'-triphosphate = RNA(n+1) + diphosphate. Its function is as follows. Promotes RNA polymerase assembly. Latches the N- and C-terminal regions of the beta' subunit thereby facilitating its interaction with the beta and alpha subunits. This Thermodesulfovibrio yellowstonii (strain ATCC 51303 / DSM 11347 / YP87) protein is DNA-directed RNA polymerase subunit omega.